Here is a 68-residue protein sequence, read N- to C-terminus: Conotoxin ArMMSK-01 (68 aa).

A signal peptide spans 1–20 (MMSKLGVLLTICMLLFPLTA). Residues 21–51 (LPLDGDQPADRPAERMQDDFISEQHPLFNPI) constitute a propeptide that is removed on maturation. Disulfide bonds link cysteine 54–cysteine 67, cysteine 55–cysteine 63, and cysteine 59–cysteine 66. 4-hydroxyproline is present on proline 65.

This sequence belongs to the conotoxin M superfamily. In terms of tissue distribution, expressed by the venom duct.

Its subcellular location is the secreted. In Conus arenatus (Sand-dusted cone), this protein is Conotoxin ArMMSK-01.